The sequence spans 285 residues: Mitochondrial substrate carrier family protein L (285 aa).

Over 1–13 the chain is Mitochondrial intermembrane; it reads MIASKETKEKIRN. Solcar repeat units lie at residues 8–94, 103–185, and 193–282; these read KEKI…VKSK, ISLG…AQRY, and MTMG…VMKF. The helical transmembrane segment at 14–34 threads the bilayer; it reads FIGGFASGAASTLAGHPFDTL. Over 35–69 the chain is Mitochondrial matrix; the sequence is KVRLQTEGSTGRFRGLAHCFTTTIKEEGFFALYKG. A helical transmembrane segment spans residues 70 to 90; the sequence is VTPPLLGMSIINSCMFGAMNI. Over 91-102 the chain is Mitochondrial intermembrane; that stretch reads VKSKIHTDKSTP. Residues 103-123 traverse the membrane as a helical segment; sequence ISLGEIMVSGAITGWIVSFVA. The Mitochondrial matrix portion of the chain corresponds to 124–156; the sequence is CPIETVKSKLQVQYTGVKLYNGPIDCIKKIGIR. A helical transmembrane segment spans residues 157-177; sequence GLYKALIPTGFQRNSLYAYFG. Topologically, residues 178-198 are mitochondrial intermembrane; that stretch reads CYELAQRYLRREDGSMTMGRS. A helical transmembrane segment spans residues 199-219; that stretch reads FIAGGIAGTGFWLTNFPFDVI. The Mitochondrial matrix portion of the chain corresponds to 220-256; it reads RSRIMTMPYNESPPRYKGMIDCAKHIYRVDGLKGFWK. Residues 257–277 form a helical membrane-spanning segment; sequence GFSPCLLRTFPANGATFVAYE. The Mitochondrial intermembrane portion of the chain corresponds to 278-285; the sequence is CVMKFFPM.

The protein belongs to the mitochondrial carrier (TC 2.A.29) family.

It localises to the mitochondrion inner membrane. Functionally, mitochondrial solute carriers shuttle metabolites, nucleotides, and cofactors through the mitochondrial inner membrane. In Dictyostelium discoideum (Social amoeba), this protein is Mitochondrial substrate carrier family protein L (mcfL).